Reading from the N-terminus, the 113-residue chain is CRISPR-associated endoribonuclease Cas2 (113 aa).

Residue aspartate 33 coordinates Mg(2+).

Belongs to the CRISPR-associated endoribonuclease Cas2 protein family. In terms of assembly, homodimer, forms a heterotetramer with a Cas1 homodimer. Mg(2+) serves as cofactor.

Its function is as follows. CRISPR (clustered regularly interspaced short palindromic repeat), is an adaptive immune system that provides protection against mobile genetic elements (viruses, transposable elements and conjugative plasmids). CRISPR clusters contain sequences complementary to antecedent mobile elements and target invading nucleic acids. CRISPR clusters are transcribed and processed into CRISPR RNA (crRNA). Functions as a ssRNA-specific endoribonuclease. Involved in the integration of spacer DNA into the CRISPR cassette. The type III-A Csm effector complex binds crRNA and acts as a crRNA-guided RNase, DNase and cyclic oligoadenylate synthase; binding of target RNA cognate to the crRNA is required for all activities. This Mycobacterium tuberculosis (strain CDC 1551 / Oshkosh) protein is CRISPR-associated endoribonuclease Cas2.